A 282-amino-acid chain; its full sequence is Rhomboid protease GlpG (282 aa).

6 helical membrane-spanning segments follow: residues 96 to 116 (AGPL…WMQF), 144 to 164 (GLLH…WYLG), 176 to 196 (LFVI…LFSG), 197 to 217 (SHFG…WLTG), 225 to 242 (IGVP…LIVG), and 247 to 269 (FGLS…MALW). Serine 203 (nucleophile) is an active-site residue. Histidine 256 is an active-site residue.

Belongs to the peptidase S54 family.

The protein resides in the cell inner membrane. The catalysed reaction is Cleaves type-1 transmembrane domains using a catalytic dyad composed of serine and histidine that are contributed by different transmembrane domains.. Its function is as follows. Rhomboid-type serine protease that catalyzes intramembrane proteolysis. The polypeptide is Rhomboid protease GlpG (Photorhabdus laumondii subsp. laumondii (strain DSM 15139 / CIP 105565 / TT01) (Photorhabdus luminescens subsp. laumondii)).